We begin with the raw amino-acid sequence, 357 residues long: MTVSVAVAGATGYAGSEILRLLLSHPQYRAGAMTIGALTGASHAGQSVEALMPHLVELHGRTIEKTEPARLAEHDIVFLALPHGHSAKIAQSLPDETLIIDCGADFRLADKEQWEAFYDSPYAGSWPYGIPEMPGHRKKIASTRRIAVPGCFPTGATLAVLPALTSKLITPEISIVSVTGVSGAGKKPSVGMLGSETMGSARAYKAGGKHRHTPEIIQNLQEACDEPVQVSFTPVLAPMQRGILTTASAPASDELVALTEKDPSAAQDAVKAAYRSFYSDEKFVVVLNGDQQPATQSVLGSNAVHIQAEYDVAARRVVVTSAIDNLVKGTAGAAIQCMNLAQGWPEDSGLSINGVAP.

Residue cysteine 151 is part of the active site.

This sequence belongs to the NAGSA dehydrogenase family. Type 1 subfamily.

The protein localises to the cytoplasm. The catalysed reaction is N-acetyl-L-glutamate 5-semialdehyde + phosphate + NADP(+) = N-acetyl-L-glutamyl 5-phosphate + NADPH + H(+). It functions in the pathway amino-acid biosynthesis; L-arginine biosynthesis; N(2)-acetyl-L-ornithine from L-glutamate: step 3/4. Catalyzes the NADPH-dependent reduction of N-acetyl-5-glutamyl phosphate to yield N-acetyl-L-glutamate 5-semialdehyde. This Corynebacterium kroppenstedtii (strain DSM 44385 / JCM 11950 / CIP 105744 / CCUG 35717) protein is N-acetyl-gamma-glutamyl-phosphate reductase.